The chain runs to 149 residues: UPF0208 membrane protein VSAL_I2111 (149 aa).

A run of 2 helical transmembrane segments spans residues 41 to 61 and 69 to 89; these read FAVK…MVFN and SIII…WLGN.

This sequence belongs to the UPF0208 family.

It is found in the cell inner membrane. In Aliivibrio salmonicida (strain LFI1238) (Vibrio salmonicida (strain LFI1238)), this protein is UPF0208 membrane protein VSAL_I2111.